We begin with the raw amino-acid sequence, 248 residues long: Small ribosomal subunit protein uS2 (248 aa).

This sequence belongs to the universal ribosomal protein uS2 family.

This Herminiimonas arsenicoxydans protein is Small ribosomal subunit protein uS2.